Reading from the N-terminus, the 292-residue chain is Short chain dehydrogenases/reductase notP' (292 aa).

The tract at residues 1–25 is disordered; sequence MPQTSDGNVHAPQYREAKPSQGDPS. 7 residues coordinate NADP(+): L48, D97, K158, Y193, K197, I230, and T232. Y193 serves as the catalytic Proton donor. Catalysis depends on K197, which acts as the Lowers pKa of active site Tyr.

Belongs to the short-chain dehydrogenases/reductases (SDR) family.

Its function is as follows. Short chain dehydrogenases/reductase; part of the gene cluster that mediates the biosynthesis of notoamide, a fungal indole alkaloid that belongs to a family of natural products containing a characteristic bicyclo[2.2.2]diazaoctane core. The first step of notoamide biosynthesis involves coupling of L-proline and L-tryptophan by the bimodular NRPS notE', to produce cyclo-L-tryptophan-L-proline called brevianamide F. The reverse prenyltransferase notF' then acts as a deoxybrevianamide E synthase and converts brevianamide F to deoxybrevianamide E via reverse prenylation at C-2 of the indole ring leading to the bicyclo[2.2.2]diazaoctane core. Deoxybrevianamide E is further hydroxylated at C-6 of the indole ring, likely catalyzed by the cytochrome P450 monooxygenase notG', to yield 6-hydroxy-deoxybrevianamide E. 6-hydroxy-deoxybrevianamide E is a specific substrate of the prenyltransferase notC' for normal prenylation at C-7 to produce 6-hydroxy-7-prenyl-deoxybrevianamide, also called notoamide S. As the proposed pivotal branching point in notoamide biosynthesis, notoamide S can be diverted to notoamide E through an oxidative pyran ring closure putatively catalyzed by either notH' cytochrome P450 monooxygenase or the notD' FAD-linked oxidoreductase. This step would be followed by an indole 2,3-epoxidation-initiated pinacol-like rearrangement catalyzed by the notB' FAD-dependent monooxygenase leading to the formation of notoamide C and notoamide D. On the other hand notoamide S is converted to notoamide T by notH' (or notD'), a bifunctional oxidase that also functions as the intramolecular Diels-Alderase responsible for generation of (-)-notoamide T. To generate antipodal (+)-notoaminide T, notH (or notD) in Aspergillus strain MF297-2 is expected to catalyze a Diels-Alder reaction leading to the opposite stereochemistry. The remaining oxidoreductase notD' (or notH') likely catalyzes the oxidative pyran ring formation to yield (-)-stephacidin A. The FAD-dependent monooxygenase notI' is highly similar to notB' and is predicted to catalyze a similar conversion from (-)-stephacidin A to (+)-notoamide B via the 2,3-epoxidation of (-)-stephacidin A followed by a pinacol-type rearrangement. Finally, it remains unclear which enzyme could be responsible for the final hydroxylation steps leading to notoamide A and sclerotiamide. The function of notP' in the notoamide biosynthesis has not been determined yet. The polypeptide is Short chain dehydrogenases/reductase notP' (Aspergillus versicolor).